Consider the following 364-residue polypeptide: Mannose-1-phosphate guanylyltransferase catalytic subunit beta (364 aa).

The interval 2–220 (KALILVGGYG…PGFWMDVGQP (219 aa)) is substrate-binding domain. Asp109 contributes to the GDP-alpha-D-mannose binding site. Asp109 contacts Mg(2+). The active site involves Lys160. GDP-alpha-D-mannose is bound at residue Asp216. Residue Asp216 coordinates Mg(2+). The interval 243 to 364 (ATGSNIHGTA…VNVPSKDIIM (122 aa)) is hexapeptide repeat domain.

This sequence belongs to the transferase hexapeptide repeat family. As to quaternary structure, component of the GMPPA-GMPPB mannose-1-phosphate guanylyltransferase complex composed of 4 GMPPA subunits and 8 tag-335/GMPPB subunits; the complex is organized into three layers, a central layer made up of 2 GMPPA dimers sandwiched between two layers each made up of 2 tag-335/GMPPB dimers. Catalytic activity of tag-335/GMPPB is reduced when part of the complex and binding of GDP-alpha-D-Mannose by GMPPA induces allosteric feedback inhibition of tag-335/GMPPB. Mg(2+) serves as cofactor.

It catalyses the reaction alpha-D-mannose 1-phosphate + GTP + H(+) = GDP-alpha-D-mannose + diphosphate. It participates in nucleotide-sugar biosynthesis; GDP-alpha-D-mannose biosynthesis; GDP-alpha-D-mannose from alpha-D-mannose 1-phosphate (GTP route): step 1/1. With respect to regulation, enzyme activity is reduced by incorporation into the GMPPA-GMPPB mannose-1-phosphate guanylyltransferase complex. Allosterically inhibited, when part of the GMPPA-GMPPB complex, by GDP-alpha-D-mannose binding to GMPPA. Catalytic subunit of the GMPPA-GMPPB mannose-1-phosphate guanylyltransferase complex. Catalyzes the formation of GDP-mannose, an essential precursor of glycan moieties of glycoproteins and glycolipids. Can catalyze the reverse reaction in vitro. Together with GMPPA regulates GDP-alpha-D-mannose levels. The chain is Mannose-1-phosphate guanylyltransferase catalytic subunit beta from Caenorhabditis briggsae.